The sequence spans 123 residues: Ribosome-binding factor A (123 aa).

This sequence belongs to the RbfA family. As to quaternary structure, monomer. Binds 30S ribosomal subunits, but not 50S ribosomal subunits or 70S ribosomes.

It is found in the cytoplasm. In terms of biological role, one of several proteins that assist in the late maturation steps of the functional core of the 30S ribosomal subunit. Associates with free 30S ribosomal subunits (but not with 30S subunits that are part of 70S ribosomes or polysomes). Required for efficient processing of 16S rRNA. May interact with the 5'-terminal helix region of 16S rRNA. The chain is Ribosome-binding factor A from Chlamydia trachomatis serovar A (strain ATCC VR-571B / DSM 19440 / HAR-13).